A 576-amino-acid chain; its full sequence is Alpha-bisabolol synthase (576 aa).

(2E,6E)-farnesyl diphosphate is bound by residues R286, D323, D327, R466, and N469. D323 and D327 together coordinate Mg(2+). Positions 323-327 match the DDXXD motif motif; the sequence is DDVYD. Mg(2+)-binding residues include N469, T473, and E477.

Belongs to the terpene synthase family. Tpsb subfamily. Mg(2+) is required as a cofactor. Requires Mn(2+) as cofactor.

Produces a mixture of beta-bisabolene and alpha-bisabolol, along with traces of alpha-bisabolene and farnesene isomers from (2E,6E)-farnesyl diphosphate in fragrance biosynthesis. The chain is Alpha-bisabolol synthase from Santalum spicatum (Australian sandalwood).